The chain runs to 65 residues: Large ribosomal subunit protein bL35 (65 aa).

Belongs to the bacterial ribosomal protein bL35 family.

The protein is Large ribosomal subunit protein bL35 of Acetivibrio thermocellus (strain ATCC 27405 / DSM 1237 / JCM 9322 / NBRC 103400 / NCIMB 10682 / NRRL B-4536 / VPI 7372) (Clostridium thermocellum).